A 33-amino-acid polypeptide reads, in one-letter code: Lysozyme C, spleen isozyme (33 aa).

Belongs to the glycosyl hydrolase 22 family. Monomer.

The enzyme catalyses Hydrolysis of (1-&gt;4)-beta-linkages between N-acetylmuramic acid and N-acetyl-D-glucosamine residues in a peptidoglycan and between N-acetyl-D-glucosamine residues in chitodextrins.. In terms of biological role, lysozymes have primarily a bacteriolytic function; those in tissues and body fluids are associated with the monocyte-macrophage system and enhance the activity of immunoagents. The protein is Lysozyme C, spleen isozyme of Equus caballus (Horse).